We begin with the raw amino-acid sequence, 222 residues long: Ribonuclease T (222 aa).

Residues 20–194 (VVIDVETAGF…YDTERTAELF (175 aa)) form the Exonuclease domain. Aspartate 23, glutamate 25, histidine 181, and aspartate 186 together coordinate Mg(2+). The active-site Proton donor/acceptor is the histidine 181.

It belongs to the RNase T family. As to quaternary structure, homodimer. Mg(2+) serves as cofactor.

Functionally, trims short 3' overhangs of a variety of RNA species, leaving a one or two nucleotide 3' overhang. Responsible for the end-turnover of tRNA: specifically removes the terminal AMP residue from uncharged tRNA (tRNA-C-C-A). Also appears to be involved in tRNA biosynthesis. The polypeptide is Ribonuclease T (Shewanella sp. (strain ANA-3)).